A 171-amino-acid polypeptide reads, in one-letter code: Ribosome maturation factor RimM (171 aa).

Residues 96-170 (AEGEYYYHEI…LVTIHVTEGL (75 aa)) form the PRC barrel domain.

The protein belongs to the RimM family. In terms of assembly, binds ribosomal protein uS19.

It localises to the cytoplasm. Functionally, an accessory protein needed during the final step in the assembly of 30S ribosomal subunit, possibly for assembly of the head region. Essential for efficient processing of 16S rRNA. May be needed both before and after RbfA during the maturation of 16S rRNA. It has affinity for free ribosomal 30S subunits but not for 70S ribosomes. The sequence is that of Ribosome maturation factor RimM from Bacillus anthracis (strain A0248).